A 41-amino-acid chain; its full sequence is Photosystem I reaction center subunit IX (41 aa).

The helical transmembrane segment at 7–27 threads the bilayer; the sequence is YLSTAPVLLTIWLTFTAGFII.

This sequence belongs to the PsaJ family.

It is found in the plastid. It localises to the chloroplast thylakoid membrane. May help in the organization of the PsaE and PsaF subunits. This is Photosystem I reaction center subunit IX from Phaeodactylum tricornutum (strain CCAP 1055/1).